The primary structure comprises 484 residues: Sodium/pantothenate symporter (484 aa).

The next 13 helical transmembrane spans lie at 3–23, 45–65, 74–94, 124–144, 162–182, 190–210, 238–258, 273–293, 307–327, 366–386, 397–417, 424–444, and 446–466; these read LGIILPLIIYLTFVFGAAIFA, GFVLAMTTASTYASASSFVGG, LGWVLLAMIQVPVVWLALGAL, VWLSSLALLLAFFAAMTVQFI, LLLFALTVGIYTFIGGFRAVV, TVMIFGTIILLIGTIYALGGV, FMASFWILVCFGVVGLPHTAV, MLIGTIVLSIIMLGMHLAGAL, VIPTLMIKVLPPIVAGIFLAA, VSYFSSIITLILTALLIFAAL, LFAFGGLEAAFLWVIVLGIYW, GALSSMIIGLGSYILLTQLGI, and LFNFHQIVPSLVFGLIAFLVG.

This sequence belongs to the sodium:solute symporter (SSF) (TC 2.A.21) family.

Its subcellular location is the cell inner membrane. The catalysed reaction is (R)-pantothenate(in) + Na(+)(in) = (R)-pantothenate(out) + Na(+)(out). Functionally, catalyzes the sodium-dependent uptake of extracellular pantothenate. This chain is Sodium/pantothenate symporter (panF), found in Haemophilus influenzae (strain ATCC 51907 / DSM 11121 / KW20 / Rd).